Consider the following 396-residue polypeptide: S-adenosylmethionine decarboxylase proenzyme (396 aa).

Residues glutamate 29 and glutamate 32 contribute to the active site. Serine 88 functions as the Schiff-base intermediate with substrate; via pyruvic acid in the catalytic mechanism. Serine 88 carries the pyruvic acid (Ser); by autocatalysis modification. Catalysis depends on cysteine 102, which acts as the Proton donor; for catalytic activity. Residues serine 287 and histidine 301 each act as proton acceptor; for processing activity in the active site.

The protein belongs to the eukaryotic AdoMetDC family. Pyruvate is required as a cofactor. In terms of processing, is synthesized initially as an inactive proenzyme. Formation of the active enzyme involves a self-maturation process in which the active site pyruvoyl group is generated from an internal serine residue via an autocatalytic post-translational modification. Two non-identical subunits are generated from the proenzyme in this reaction, and the pyruvate is formed at the N-terminus of the alpha chain, which is derived from the carboxyl end of the proenzyme. The post-translation cleavage follows an unusual pathway, termed non-hydrolytic serinolysis, in which the side chain hydroxyl group of the serine supplies its oxygen atom to form the C-terminus of the beta chain, while the remainder of the serine residue undergoes an oxidative deamination to produce ammonia and the pyruvoyl group blocking the N-terminus of the alpha chain.

It carries out the reaction S-adenosyl-L-methionine + H(+) = S-adenosyl 3-(methylsulfanyl)propylamine + CO2. Its pathway is amine and polyamine biosynthesis; S-adenosylmethioninamine biosynthesis; S-adenosylmethioninamine from S-adenosyl-L-methionine: step 1/1. Its function is as follows. Catalyzes the decarboxylation of S-adenosylmethionine, a key step in the biosynthetic pathway for spermidine and spermine. It is essential for normal growth, sporulation, and maintenance of ds-RNA virus. The sequence is that of S-adenosylmethionine decarboxylase proenzyme (SPE2) from Saccharomyces cerevisiae (strain ATCC 204508 / S288c) (Baker's yeast).